The following is a 449-amino-acid chain: UDP-N-acetylmuramoylalanine--D-glutamate ligase (449 aa).

118–124 (GSNGKTT) lines the ATP pocket.

The protein belongs to the MurCDEF family.

The protein resides in the cytoplasm. The enzyme catalyses UDP-N-acetyl-alpha-D-muramoyl-L-alanine + D-glutamate + ATP = UDP-N-acetyl-alpha-D-muramoyl-L-alanyl-D-glutamate + ADP + phosphate + H(+). Its pathway is cell wall biogenesis; peptidoglycan biosynthesis. Its function is as follows. Cell wall formation. Catalyzes the addition of glutamate to the nucleotide precursor UDP-N-acetylmuramoyl-L-alanine (UMA). This chain is UDP-N-acetylmuramoylalanine--D-glutamate ligase, found in Leuconostoc mesenteroides subsp. mesenteroides (strain ATCC 8293 / DSM 20343 / BCRC 11652 / CCM 1803 / JCM 6124 / NCDO 523 / NBRC 100496 / NCIMB 8023 / NCTC 12954 / NRRL B-1118 / 37Y).